A 1079-amino-acid chain; its full sequence is Capping protein inhibiting regulator of actin dynamics (1079 aa).

The segment covering 1–11 (MSQENVSDKVR) has biased composition (basic and acidic residues). 7 disordered regions span residues 1 to 293 (MSQE…EEER), 308 to 327 (ERKREQEERRRKEEEEAEKR), 341 to 383 (EHRI…EWKR), 420 to 453 (PVTPATGQQGETTAETWEGAKASSPGGPDSPTLS), 493 to 522 (EGKKAMGTPPSKSKTSPDRKSGKTKSVFES), 606 to 639 (IFGQEEGVKTESAFTETSPVQKELPSLGTKVQSR), and 658 to 1054 (PSFL…TTQV). Positions 36 to 45 (DEGSSDEEEV) are enriched in acidic residues. The segment covering 64–76 (SAKEKSVSHDTVQ) has biased composition (basic and acidic residues). Residues 115–134 (AKHKLSVKPKNQRVSRKHRR) are compositionally biased toward basic residues. The segment covering 140 to 158 (HEDDFSEIQEEFEKDEEVF) has biased composition (acidic residues). Basic and acidic residues predominate over residues 159-293 (DSSREDYGII…EERKRAEEER (135 aa)). Residues 420-434 (PVTPATGQQGETTAE) are compositionally biased toward polar residues. Residues 670-682 (PKSQRSESGSPIQ) are compositionally biased toward polar residues. Residues 684–695 (ESEDSDTKDEDG) show a composition bias toward acidic residues. Residues 756–781 (DNSTLSEKSSPISPQQENIEFQTTVA) show a composition bias toward polar residues. Composition is skewed to basic and acidic residues over residues 896–930 (WREKTDRRTELIKKEKPSLQARHSLDSSRSQDKET) and 944–983 (GFREQQQNREERRNQREAKLAEKQARDRESAGSSPTEDKG). Residues 984–993 (NGSSSIISKH) are compositionally biased toward polar residues. Residues 994–1016 (QTADENKRPDTLLARFERRDNLK) show a composition bias toward basic and acidic residues. Residues 1020 to 1033 (TLPSSVTVEITDST) show a composition bias toward polar residues.

In terms of assembly, directly interacts with actin-capping proteins; this interaction decreases the binding of capping proteins to actin.

It localises to the cytoplasm. It is found in the cytosol. Functionally, involved in epithelial cell integrity by acting on the maintenance of the actin cytoskeleton. Positively regulates the actin polymerization, by inhibiting the interaction of actin-capping proteins with actin. In Danio rerio (Zebrafish), this protein is Capping protein inhibiting regulator of actin dynamics (crad).